Here is a 292-residue protein sequence, read N- to C-terminus: Diaminopimelate epimerase (292 aa).

3 residues coordinate substrate: Asn13, Gln46, and Asn66. The active-site Proton donor is the Cys75. Substrate is bound by residues 76–77 (GN), Asn166, Asn199, and 217–218 (ER). Cys226 acts as the Proton acceptor in catalysis. A substrate-binding site is contributed by 227–228 (GT).

Belongs to the diaminopimelate epimerase family. Homodimer.

The protein resides in the cytoplasm. It carries out the reaction (2S,6S)-2,6-diaminopimelate = meso-2,6-diaminopimelate. It participates in amino-acid biosynthesis; L-lysine biosynthesis via DAP pathway; DL-2,6-diaminopimelate from LL-2,6-diaminopimelate: step 1/1. Catalyzes the stereoinversion of LL-2,6-diaminopimelate (L,L-DAP) to meso-diaminopimelate (meso-DAP), a precursor of L-lysine and an essential component of the bacterial peptidoglycan. This chain is Diaminopimelate epimerase, found in Ralstonia pickettii (strain 12J).